Consider the following 303-residue polypeptide: GMP synthase [glutamine-hydrolyzing] subunit B (303 aa).

The region spanning M1–R183 is the GMPS ATP-PPase domain. S28–S34 is a binding site for ATP.

As to quaternary structure, heterodimer composed of a glutamine amidotransferase subunit (A) and a GMP-binding subunit (B).

It catalyses the reaction XMP + L-glutamine + ATP + H2O = GMP + L-glutamate + AMP + diphosphate + 2 H(+). It functions in the pathway purine metabolism; GMP biosynthesis; GMP from XMP (L-Gln route): step 1/1. Its function is as follows. Catalyzes the synthesis of GMP from XMP. This is GMP synthase [glutamine-hydrolyzing] subunit B (guaAB) from Archaeoglobus fulgidus (strain ATCC 49558 / DSM 4304 / JCM 9628 / NBRC 100126 / VC-16).